The sequence spans 338 residues: Mitochondrial glutathione transporter SLC25A40 (338 aa).

Solcar repeat units lie at residues 13–131 (VTPL…LSAL), 139–223 (NETC…LKKW), and 233–327 (PTFM…GKAF). 6 helical membrane-spanning segments follow: residues 19–39 (MLAS…LDVV), 103–123 (LWSG…IYFT), 142–162 (CIPI…ISPL), 199–220 (WAPT…YEIL), 239–259 (FTSG…FDVV), and 298–318 (GLFS…AIMI).

It belongs to the mitochondrial carrier (TC 2.A.29) family.

Its subcellular location is the mitochondrion inner membrane. The enzyme catalyses glutathione(in) = glutathione(out). Functionally, probable mitochondrial transporter required for glutathione import into mitochondria. Glutathione, which plays key roles in oxidative metabolism, is produced exclusively in the cytosol and is imported in many organelles. Mitochondrial glutathione is required for the activity and stability of proteins containing iron-sulfur clusters, as well as erythropoiesis. This chain is Mitochondrial glutathione transporter SLC25A40, found in Homo sapiens (Human).